We begin with the raw amino-acid sequence, 519 residues long: Steroid 17-alpha-hydroxylase/17,20 lyase (519 aa).

Position 455 (Cys455) interacts with heme.

It belongs to the cytochrome P450 family. Heme is required as a cofactor.

The protein resides in the membrane. It catalyses the reaction a C21-steroid + reduced [NADPH--hemoprotein reductase] + O2 = a 17alpha-hydroxy-C21-steroid + oxidized [NADPH--hemoprotein reductase] + H2O + H(+). The enzyme catalyses 17alpha-hydroxyprogesterone + reduced [NADPH--hemoprotein reductase] + O2 = androst-4-ene-3,17-dione + acetate + oxidized [NADPH--hemoprotein reductase] + H2O + 2 H(+). The catalysed reaction is 17alpha-hydroxypregnenolone + reduced [NADPH--hemoprotein reductase] + O2 = 3beta-hydroxyandrost-5-en-17-one + acetate + oxidized [NADPH--hemoprotein reductase] + H2O + 2 H(+). It functions in the pathway lipid metabolism; steroid biosynthesis. Its function is as follows. Conversion of pregnenolone and progesterone to their 17-alpha-hydroxylated products and subsequently to dehydroepiandrosterone (DHEA) and androstenedione. Catalyzes both the 17-alpha-hydroxylation and the 17,20-lyase reaction. This is Steroid 17-alpha-hydroxylase/17,20 lyase (CYP17A1) from Rana dybowskii (Dybovsky's frog).